We begin with the raw amino-acid sequence, 197 residues long: Recombination protein RecR (197 aa).

The C4-type zinc finger occupies 57 to 72; sequence CSVCFALTEQNPCPIC. In terms of domain architecture, Toprim spans 79 to 174; that stretch reads SVICVVETSQ…RVTRLAHGIP (96 aa).

Belongs to the RecR family.

In terms of biological role, may play a role in DNA repair. It seems to be involved in an RecBC-independent recombinational process of DNA repair. It may act with RecF and RecO. The protein is Recombination protein RecR of Trichlorobacter lovleyi (strain ATCC BAA-1151 / DSM 17278 / SZ) (Geobacter lovleyi).